A 301-amino-acid polypeptide reads, in one-letter code: MANLRDIRKKIGSVKNTQRITHAMKLVSTSKLRKAEEVARNSRAYALKLDAVFDDVLSKMKNQGIEDIQSKYFRELERLEIKKVDIIFITADKGLCGGFNTNTIKKVLACTNEYKEKDIKVRLRGIGKKGNEYFSFNGIEVLDKINNLSSMPNYERAQEFMKKVVEDYLSGKTDKVIIIHNGFKNMITQEIRVKTILPIGYKIIHQNPQPSETQETITSEPSGSEDEILDSLAEKYVEYSLYYALIDSLAAEHSARMQAMDTATNNAKDLVKTLTISYNKARQEAITTELVEINAGVEALK.

This sequence belongs to the ATPase gamma chain family. F-type ATPases have 2 components, CF(1) - the catalytic core - and CF(0) - the membrane proton channel. CF(1) has five subunits: alpha(3), beta(3), gamma(1), delta(1), epsilon(1). CF(0) has three main subunits: a, b and c.

It localises to the cell inner membrane. Functionally, produces ATP from ADP in the presence of a proton gradient across the membrane. The gamma chain is believed to be important in regulating ATPase activity and the flow of protons through the CF(0) complex. The protein is ATP synthase gamma chain of Helicobacter pylori (strain J99 / ATCC 700824) (Campylobacter pylori J99).